We begin with the raw amino-acid sequence, 758 residues long: EMILIN-3 (758 aa).

The signal sequence occupies residues 1-21 (MGRRLSVWLCTVAALLSGAQA). The EMI domain maps to 54 to 130 (HKSLCAYVVH…PGLTGESCPE (77 aa)). 3 cysteine pairs are disulfide-bonded: Cys-58-Cys-120, Cys-85-Cys-91, and Cys-119-Cys-128. N-linked (GlcNAc...) asparagine glycosylation occurs at Asn-65. The segment at 131–178 (HLTDHGATPPHQEPEPQIPLGQLGPGPRPSPYSREAPRPRGRKGQGPF) is disordered. A coiled-coil region spans residues 379–401 (SQLALISARVDSLERNLQAVTET). N-linked (GlcNAc...) asparagine glycosylation occurs at Asn-436. 2 coiled-coil regions span residues 460–483 (GSTL…ELSP) and 528–567 (AEVK…QLAE). 2 N-linked (GlcNAc...) asparagine glycosylation sites follow: Asn-555 and Asn-609. Coiled-coil stretches lie at residues 642 to 677 (RQVL…ELQH) and 720 to 753 (HIDK…AEVR). A glycan (N-linked (GlcNAc...) asparagine) is linked at Asn-725.

It is found in the secreted. The protein resides in the extracellular space. The protein localises to the extracellular matrix. It localises to the cytoplasm. The sequence is that of EMILIN-3 (Emilin3) from Mus musculus (Mouse).